The following is a 505-amino-acid chain: ATP synthase subunit alpha (505 aa).

Residue glycine 169–threonine 176 participates in ATP binding.

This sequence belongs to the ATPase alpha/beta chains family. F-type ATPases have 2 components, CF(1) - the catalytic core - and CF(0) - the membrane proton channel. CF(1) has five subunits: alpha(3), beta(3), gamma(1), delta(1), epsilon(1). CF(0) has three main subunits: a(1), b(2) and c(9-12). The alpha and beta chains form an alternating ring which encloses part of the gamma chain. CF(1) is attached to CF(0) by a central stalk formed by the gamma and epsilon chains, while a peripheral stalk is formed by the delta and b chains.

The protein localises to the cell membrane. The enzyme catalyses ATP + H2O + 4 H(+)(in) = ADP + phosphate + 5 H(+)(out). Produces ATP from ADP in the presence of a proton gradient across the membrane. The alpha chain is a regulatory subunit. The protein is ATP synthase subunit alpha of Leuconostoc mesenteroides subsp. mesenteroides (strain ATCC 8293 / DSM 20343 / BCRC 11652 / CCM 1803 / JCM 6124 / NCDO 523 / NBRC 100496 / NCIMB 8023 / NCTC 12954 / NRRL B-1118 / 37Y).